The sequence spans 469 residues: Phosphatidylinositol 4-kinase type 2-beta (469 aa).

A disordered region spans residues 1-84 (MAEACEPTRP…LDRTRTTSSE (84 aa)). Serine 37 is subject to Phosphoserine. In terms of domain architecture, PI3K/PI4K catalytic spans 108–439 (GVFPERISQG…AQMPCVIVEC (332 aa)). Positions 114–120 (ISQGSSG) are G-loop. Residues serine 121 and lysine 136 each coordinate ATP. The interval 141–143 (EPY) is important for substrate binding. The interval 149-162 (KWTKYVHKVCCPCC) is important for interaction with membranes. ATP is bound by residues 245–248 (QLFV) and 259–260 (RR). The segment at 252 to 260 (KEAEYWLRR) is important for interaction with membranes. The segment at 289 to 297 (RNTDRGNDN) is catalytic loop. The interval 330–350 (AIDNGLAFPFKHPDEWRAYPF) is activation loop. Aspartate 332 contributes to the ATP binding site. The important for interaction with membranes stretch occupies residues 345-354 (WRAYPFHWAW).

Belongs to the PI3/PI4-kinase family. Type II PI4K subfamily.

It localises to the cytoplasm. Its subcellular location is the cytosol. It is found in the golgi apparatus membrane. The protein localises to the endoplasmic reticulum membrane. The protein resides in the cell membrane. It localises to the early endosome membrane. The enzyme catalyses a 1,2-diacyl-sn-glycero-3-phospho-(1D-myo-inositol) + ATP = a 1,2-diacyl-sn-glycero-3-phospho-(1D-myo-inositol 4-phosphate) + ADP + H(+). Together with PI4K2A and the type III PI4Ks (PIK4CA and PIK4CB) it contributes to the overall PI4-kinase activity of the cell. This contribution may be especially significant in plasma membrane, endosomal and Golgi compartments. The phosphorylation of phosphatidylinositol (PI) to PI4P is the first committed step in the generation of phosphatidylinositol 4,5-bisphosphate (PIP2), a precursor of the second messenger inositol 1,4,5-trisphosphate (InsP3). Contributes to the production of InsP3 in stimulated cells and is likely to be involved in the regulation of vesicular trafficking. In Mus musculus (Mouse), this protein is Phosphatidylinositol 4-kinase type 2-beta (Pi4k2b).